The chain runs to 283 residues: Probable endonuclease 4 (283 aa).

9 residues coordinate Zn(2+): histidine 66, histidine 106, glutamate 141, aspartate 174, histidine 177, histidine 211, aspartate 224, histidine 226, and glutamate 256.

It belongs to the AP endonuclease 2 family. It depends on Zn(2+) as a cofactor.

The enzyme catalyses Endonucleolytic cleavage to 5'-phosphooligonucleotide end-products.. Its function is as follows. Endonuclease IV plays a role in DNA repair. It cleaves phosphodiester bonds at apurinic or apyrimidinic (AP) sites, generating a 3'-hydroxyl group and a 5'-terminal sugar phosphate. This chain is Probable endonuclease 4, found in Carboxydothermus hydrogenoformans (strain ATCC BAA-161 / DSM 6008 / Z-2901).